The chain runs to 412 residues: uncharacterized protein (412 aa).

11 helical membrane-spanning segments follow: residues Leu17–Ile37, Val54–Val74, Met91–Leu111, Gly112–Gly132, Leu146–Gly166, Trp173–Met193, Val225–Gly245, Thr257–Gly277, Leu299–Ile319, Val346–Gly366, and Ala375–Ala395.

The protein belongs to the major facilitator superfamily.

Its subcellular location is the cell membrane. This is an uncharacterized protein from Bacillus subtilis (strain 168).